The primary structure comprises 476 residues: Cysteine--tRNA ligase (476 aa).

Cys28 contributes to the Zn(2+) binding site. The 'HIGH' region signature appears at 30 to 40; it reads PTVYDNTHLGH. 3 residues coordinate Zn(2+): Cys208, His233, and Glu237. The 'KMSKS' region motif lies at 265–269; sequence KMSKS. Residue Lys268 coordinates ATP.

This sequence belongs to the class-I aminoacyl-tRNA synthetase family. The cofactor is Zn(2+).

The protein resides in the cytoplasm. The catalysed reaction is tRNA(Cys) + L-cysteine + ATP = L-cysteinyl-tRNA(Cys) + AMP + diphosphate. In Methanococcus maripaludis (strain DSM 14266 / JCM 13030 / NBRC 101832 / S2 / LL), this protein is Cysteine--tRNA ligase.